A 340-amino-acid polypeptide reads, in one-letter code: Cytosolic Fe-S cluster assembly factor NBP35 (340 aa).

The tract at residues 1 to 41 (MPSLVDPVANKTDEGNNRTDLKAPEPEHCPGTESEEAGKAD) is disordered. Residues 11 to 30 (KTDEGNNRTDLKAPEPEHCP) are compositionally biased toward basic and acidic residues. [4Fe-4S] cluster-binding residues include Cys-29, Cys-43, Cys-46, and Cys-52. 82-89 (GKGGVGKS) lines the ATP pocket. The [4Fe-4S] cluster site is built by Cys-255 and Cys-258.

It belongs to the Mrp/NBP35 ATP-binding proteins family. NUBP1/NBP35 subfamily. As to quaternary structure, heterotetramer of 2 NBP35 and 2 CFD1 chains. It depends on [4Fe-4S] cluster as a cofactor.

It localises to the cytoplasm. Its subcellular location is the nucleus. Component of the cytosolic iron-sulfur (Fe/S) protein assembly (CIA) machinery. Required for maturation of extramitochondrial Fe-S proteins. The NBP35-CFD1 heterotetramer forms a Fe-S scaffold complex, mediating the de novo assembly of an Fe-S cluster and its transfer to target apoproteins. Required for biogenesis and export of both ribosomal subunits, which may reflect a role in assembly of the Fe/S clusters in RLI1, a protein which performs rRNA processing and ribosome export. In Yarrowia lipolytica (strain CLIB 122 / E 150) (Yeast), this protein is Cytosolic Fe-S cluster assembly factor NBP35.